We begin with the raw amino-acid sequence, 190 residues long: Threonylcarbamoyl-AMP synthase (190 aa).

Positions 7–190 (GDAIAAAIDV…ALTGELFRQG (184 aa)) constitute a YrdC-like domain.

The protein belongs to the SUA5 family. TsaC subfamily.

It localises to the cytoplasm. The catalysed reaction is L-threonine + hydrogencarbonate + ATP = L-threonylcarbamoyladenylate + diphosphate + H2O. Functionally, required for the formation of a threonylcarbamoyl group on adenosine at position 37 (t(6)A37) in tRNAs that read codons beginning with adenine. Catalyzes the conversion of L-threonine, HCO(3)(-)/CO(2) and ATP to give threonylcarbamoyl-AMP (TC-AMP) as the acyladenylate intermediate, with the release of diphosphate. This Shigella boydii serotype 4 (strain Sb227) protein is Threonylcarbamoyl-AMP synthase.